Reading from the N-terminus, the 1611-residue chain is Pentafunctional AROM polypeptide (1611 aa).

Residues 1 to 406 form a 3-dehydroquinate synthase region; the sequence is MSQVSGGKVP…VEERASTVSD (406 aa). NAD(+)-binding positions include 64–66, 97–100, 128–130, and aspartate 133; these read DTN, EESK, and GGV. Residue arginine 144 participates in 7-phospho-2-dehydro-3-deoxy-D-arabino-heptonate binding. 153–154 serves as a coordination point for NAD(+); it reads TT. Residues aspartate 160 and lysine 166 each coordinate 7-phospho-2-dehydro-3-deoxy-D-arabino-heptonate. Residue lysine 175 coordinates NAD(+). Asparagine 176 contributes to the 7-phospho-2-dehydro-3-deoxy-D-arabino-heptonate binding site. NAD(+)-binding positions include 193–196 and asparagine 204; that span reads WLLT. Glutamate 208 lines the Zn(2+) pocket. 7-phospho-2-dehydro-3-deoxy-D-arabino-heptonate-binding positions include 208 to 211 and lysine 272; that span reads EVIK. Glutamate 282 functions as the Proton acceptor; for 3-dehydroquinate synthase activity in the catalytic mechanism. 7-phospho-2-dehydro-3-deoxy-D-arabino-heptonate is bound by residues 286-290 and histidine 293; that span reads RNLVN. A Zn(2+)-binding site is contributed by histidine 293. Residue histidine 297 is the Proton acceptor; for 3-dehydroquinate synthase activity of the active site. Positions 309 and 378 each coordinate 7-phospho-2-dehydro-3-deoxy-D-arabino-heptonate. Histidine 309 is a Zn(2+) binding site. The tract at residues 419–882 is EPSP synthase; the sequence is VRESVSAPRP…WDVLGGPLNV (464 aa). Cysteine 864 functions as the For EPSP synthase activity in the catalytic mechanism. Residues 915 to 1092 are shikimate kinase; that stretch reads DASIVLIGMR…VPISPAFFLS (178 aa). 922–929 contributes to the ATP binding site; it reads GMRASGKS. The 3-dehydroquinase stretch occupies residues 1093–1309; sequence LTFPRVQDAW…AAPGQMSVRD (217 aa). Histidine 1212 serves as the catalytic Proton acceptor; for 3-dehydroquinate dehydratase activity. Lysine 1240 serves as the catalytic Schiff-base intermediate with substrate; for 3-dehydroquinate dehydratase activity. Residues 1322–1611 are shikimate dehydrogenase; sequence KRHFFLFGSP…AAYRAAAASM (290 aa).

This sequence in the N-terminal section; belongs to the sugar phosphate cyclases superfamily. Dehydroquinate synthase family. The protein in the 2nd section; belongs to the EPSP synthase family. It in the 3rd section; belongs to the shikimate kinase family. In the 4th section; belongs to the type-I 3-dehydroquinase family. This sequence in the C-terminal section; belongs to the shikimate dehydrogenase family. Homodimer. Requires Zn(2+) as cofactor.

The protein localises to the cytoplasm. The catalysed reaction is 7-phospho-2-dehydro-3-deoxy-D-arabino-heptonate = 3-dehydroquinate + phosphate. The enzyme catalyses 3-dehydroquinate = 3-dehydroshikimate + H2O. It carries out the reaction shikimate + NADP(+) = 3-dehydroshikimate + NADPH + H(+). It catalyses the reaction shikimate + ATP = 3-phosphoshikimate + ADP + H(+). The catalysed reaction is 3-phosphoshikimate + phosphoenolpyruvate = 5-O-(1-carboxyvinyl)-3-phosphoshikimate + phosphate. It participates in metabolic intermediate biosynthesis; chorismate biosynthesis; chorismate from D-erythrose 4-phosphate and phosphoenolpyruvate: step 2/7. It functions in the pathway metabolic intermediate biosynthesis; chorismate biosynthesis; chorismate from D-erythrose 4-phosphate and phosphoenolpyruvate: step 3/7. Its pathway is metabolic intermediate biosynthesis; chorismate biosynthesis; chorismate from D-erythrose 4-phosphate and phosphoenolpyruvate: step 4/7. The protein operates within metabolic intermediate biosynthesis; chorismate biosynthesis; chorismate from D-erythrose 4-phosphate and phosphoenolpyruvate: step 5/7. It participates in metabolic intermediate biosynthesis; chorismate biosynthesis; chorismate from D-erythrose 4-phosphate and phosphoenolpyruvate: step 6/7. In terms of biological role, the AROM polypeptide catalyzes 5 consecutive enzymatic reactions in prechorismate polyaromatic amino acid biosynthesis. The sequence is that of Pentafunctional AROM polypeptide from Malassezia globosa (strain ATCC MYA-4612 / CBS 7966) (Dandruff-associated fungus).